Here is a 422-residue protein sequence, read N- to C-terminus: uncharacterized protein (422 aa).

The RRM domain occupies 5 to 83; the sequence is CVVYVGNIPY…RRLRVDFPTA (79 aa). The disordered stretch occupies residues 337–358; the sequence is RSSSIPSSGSIRSPSLTTTSAQ.

The protein resides in the nucleus. This is an uncharacterized protein from Schizosaccharomyces pombe (strain 972 / ATCC 24843) (Fission yeast).